Consider the following 231-residue polypeptide: Large ribosomal subunit protein uL1 (231 aa).

Belongs to the universal ribosomal protein uL1 family. In terms of assembly, part of the 50S ribosomal subunit.

Binds directly to 23S rRNA. The L1 stalk is quite mobile in the ribosome, and is involved in E site tRNA release. Its function is as follows. Protein L1 is also a translational repressor protein, it controls the translation of the L11 operon by binding to its mRNA. This is Large ribosomal subunit protein uL1 from Paracidovorax citrulli (strain AAC00-1) (Acidovorax citrulli).